The following is a 576-amino-acid chain: Glutamine-dependent NAD(+) synthetase (576 aa).

In terms of domain architecture, CN hydrolase spans 4 to 246; that stretch reads LRVTLAQLNP…EEIITVDLDL (243 aa). Glutamate 44 (proton acceptor; for glutaminase activity) is an active-site residue. Lysine 112 serves as the catalytic For glutaminase activity. Tyrosine 118 is an L-glutamine binding site. Cysteine 148 (nucleophile; for glutaminase activity) is an active-site residue. L-glutamine-binding residues include serine 176 and lysine 182. The segment at 292–576 is ligase; it reads PVREEEMFRA…PITNRFKEPL (285 aa). 321–328 lines the ATP pocket; sequence GLSGGMDS. Residue asparagine 404 participates in deamido-NAD(+) binding. Threonine 428 serves as a coordination point for ATP. Glutamate 433 and lysine 545 together coordinate deamido-NAD(+).

In the C-terminal section; belongs to the NAD synthetase family.

It carries out the reaction deamido-NAD(+) + L-glutamine + ATP + H2O = L-glutamate + AMP + diphosphate + NAD(+) + H(+). It functions in the pathway cofactor biosynthesis; NAD(+) biosynthesis; NAD(+) from deamido-NAD(+) (L-Gln route): step 1/1. Catalyzes the ATP-dependent amidation of deamido-NAD to form NAD. Uses L-glutamine as a nitrogen source. The chain is Glutamine-dependent NAD(+) synthetase (nadE2) from Thermotoga maritima (strain ATCC 43589 / DSM 3109 / JCM 10099 / NBRC 100826 / MSB8).